A 548-amino-acid polypeptide reads, in one-letter code: Organic cation transporter protein (548 aa).

Residues 1-22 lie on the Cytoplasmic side of the membrane; it reads MGYDDVITHLGEFGPYQKRIYY. The helical transmembrane segment at 23–43 threads the bilayer; the sequence is LLCLPAIVCAFHKLAGVFLLA. Topologically, residues 44–127 are extracellular; that stretch reads KPDFRCALPY…TEWNLVCSRS (84 aa). 4 N-linked (GlcNAc...) asparagine glycosylation sites follow: Asn-55, Asn-67, Asn-89, and Asn-97. A helical transmembrane segment spans residues 128–148; the sequence is LLSATSDSLFMLGVLLGSLIF. Over 149 to 158 the chain is Cytoplasmic; that stretch reads GQMSDKLGRK. A helical transmembrane segment spans residues 159–179; it reads PTFFASLVLQLIFGVLAAVAP. At 180–189 the chain is on the extracellular side; sequence EYFSYTISRM. The chain crosses the membrane as a helical span at residues 190–210; sequence IVGATTSGVFLVAYVIALEMV. Residues 211 to 219 are Cytoplasmic-facing; sequence GSSYRLFAG. The chain crosses the membrane as a helical span at residues 220–240; sequence VAMQMFFSVGFMLTAGFAYFI. Residues 241–244 lie on the Extracellular side of the membrane; it reads HDWR. A helical membrane pass occupies residues 245-265; the sequence is WLQIAITLPGLLFLCYYWIIP. At 266-337 the chain is on the cytoplasmic side; sequence ESARWLLMKG…LLRYPNLRRK (72 aa). Residues 338-358 traverse the membrane as a helical segment; that stretch reads TLLIFFDWFVNSGVYYGLSWN. Residues 359–366 lie on the Extracellular side of the membrane; it reads TNNLGGNQ. The helical transmembrane segment at 367-387 threads the bilayer; that stretch reads LVNFMISGAVEIPGYTLLLFT. Topologically, residues 388–395 are cytoplasmic; that stretch reads LNRWGRRS. Residues 396 to 416 traverse the membrane as a helical segment; that stretch reads ILCGTMMVAGISLLATIFVPS. The Extracellular segment spans residues 417–419; sequence DMN. A helical transmembrane segment spans residues 420-440; sequence WLIVACAMIGKLAITSSYGTI. At 441–453 the chain is on the cytoplasmic side; that stretch reads YIFSAEQFPTVVR. Residues 454–474 traverse the membrane as a helical segment; the sequence is NVGLGASSMVARVGGILAPYL. Residues 475–482 lie on the Extracellular side of the membrane; sequence KLLGEIWR. The chain crosses the membrane as a helical span at residues 483–503; that stretch reads PLPLIICGALSLTAGLLSLLL. Topologically, residues 504-548 are cytoplasmic; that stretch reads PETLNKPMPETIEDGENFGKKPAPQETAEEGGTQELSGMLNGKSG. Residues 512 to 548 are disordered; sequence PETIEDGENFGKKPAPQETAEEGGTQELSGMLNGKSG.

This sequence belongs to the major facilitator (TC 2.A.1) superfamily. Organic cation transporter (TC 2.A.1.19) family. Expressed in embryos and adults at low level. Expressed at higher level in third instar larvae.

Its subcellular location is the membrane. Its function is as follows. Probably transports organic cations. This chain is Organic cation transporter protein (Orct), found in Drosophila melanogaster (Fruit fly).